Reading from the N-terminus, the 230-residue chain is Potassium/proton antiporter CemA (230 aa).

Helical transmembrane passes span Leu-7–Phe-27, Ile-106–Leu-126, Leu-145–His-165, and Leu-181–Leu-201.

The protein belongs to the CemA family.

Its subcellular location is the plastid. The protein resides in the chloroplast inner membrane. It catalyses the reaction K(+)(in) + H(+)(out) = K(+)(out) + H(+)(in). Functionally, contributes to K(+)/H(+) antiport activity by supporting proton efflux to control proton extrusion and homeostasis in chloroplasts in a light-dependent manner to modulate photosynthesis. Prevents excessive induction of non-photochemical quenching (NPQ) under continuous-light conditions. Indirectly promotes efficient inorganic carbon uptake into chloroplasts. In Zea mays (Maize), this protein is Potassium/proton antiporter CemA.